The following is a 264-amino-acid chain: ATP synthase subunit a (264 aa).

The next 7 membrane-spanning stretches (helical) occupy residues 30–50 (WNID…WLFY), 90–110 (IAPL…MDMI), 111–131 (PVDW…KVVP), 134–154 (DVNI…YYSI), 177–197 (IPVN…SLAL), 208–228 (LIFI…ALGV), and 235–255 (LIFH…LTIV).

It belongs to the ATPase A chain family. As to quaternary structure, F-type ATPases have 2 components, CF(1) - the catalytic core - and CF(0) - the membrane proton channel. CF(1) has five subunits: alpha(3), beta(3), gamma(1), delta(1), epsilon(1). CF(0) has three main subunits: a(1), b(2) and c(9-12). The alpha and beta chains form an alternating ring which encloses part of the gamma chain. CF(1) is attached to CF(0) by a central stalk formed by the gamma and epsilon chains, while a peripheral stalk is formed by the delta and b chains.

Its subcellular location is the cell inner membrane. Functionally, key component of the proton channel; it plays a direct role in the translocation of protons across the membrane. This Shewanella frigidimarina (strain NCIMB 400) protein is ATP synthase subunit a.